The sequence spans 117 residues: Ribosome-binding factor A (117 aa).

It belongs to the RbfA family. Monomer. Binds 30S ribosomal subunits, but not 50S ribosomal subunits or 70S ribosomes.

The protein localises to the cytoplasm. Functionally, one of several proteins that assist in the late maturation steps of the functional core of the 30S ribosomal subunit. Associates with free 30S ribosomal subunits (but not with 30S subunits that are part of 70S ribosomes or polysomes). Required for efficient processing of 16S rRNA. May interact with the 5'-terminal helix region of 16S rRNA. This is Ribosome-binding factor A from Leptospira borgpetersenii serovar Hardjo-bovis (strain JB197).